A 100-amino-acid chain; its full sequence is Urease subunit gamma (100 aa).

The protein belongs to the urease gamma subunit family. In terms of assembly, heterotrimer of UreA (gamma), UreB (beta) and UreC (alpha) subunits. Three heterotrimers associate to form the active enzyme.

It is found in the cytoplasm. It catalyses the reaction urea + 2 H2O + H(+) = hydrogencarbonate + 2 NH4(+). The protein operates within nitrogen metabolism; urea degradation; CO(2) and NH(3) from urea (urease route): step 1/1. The sequence is that of Urease subunit gamma from Nitrosococcus oceani (strain ATCC 19707 / BCRC 17464 / JCM 30415 / NCIMB 11848 / C-107).